Consider the following 103-residue polypeptide: SOSS complex subunit C (103 aa).

Belongs to the SOSS-C family. Belongs to the multiprotein complex Integrator. Component of the SOSS complex, composed of soss-b (soss-b1/nabp2 or soss-b2/nabp1), soss-a/ints3 and soss-c/inip.

Its subcellular location is the nucleus. Functionally, component of the SOSS complex, a multiprotein complex that functions downstream of the MRN complex to promote DNA repair and G2/M checkpoint. The SOSS complex associates with single-stranded DNA at DNA lesions and influences diverse endpoints in the cellular DNA damage response including cell-cycle checkpoint activation, recombinational repair and maintenance of genomic stability. Required for efficient homologous recombination-dependent repair of double-strand breaks (DSBs). The chain is SOSS complex subunit C (inip) from Danio rerio (Zebrafish).